The sequence spans 505 residues: Transcription factor VHR2 (505 aa).

Over residues 1–16 the composition is skewed to basic and acidic residues; it reads MIDDTENSKIHLEGSH. 3 disordered regions span residues 1–23, 105–179, and 421–460; these read MIDDTENSKIHLEGSHKTGKYTG, NRKR…LPYP, and QSNPMRPHSTSEVLSAHSSTKDASTPGKEEPRVTRSSTSA. Over residues 133–148 the composition is skewed to low complexity; the sequence is PSSSNMGSCSASNASS. Over residues 421–443 the composition is skewed to polar residues; that stretch reads QSNPMRPHSTSEVLSAHSSTKDA.

It belongs to the VHR1 family.

The protein resides in the nucleus. Functionally, transcription factor that regulates ERG9, but seems to have a more global function in transcription. The chain is Transcription factor VHR2 (VHR2) from Saccharomyces cerevisiae (strain ATCC 204508 / S288c) (Baker's yeast).